We begin with the raw amino-acid sequence, 199 residues long: Thymidine kinase (199 aa).

ATP-binding positions include 9–16 and 93–96; these read GAMSSGKT and DEAQ. The active-site Proton acceptor is Glu94. Zn(2+) is bound by residues Cys151, Cys154, Cys188, and His191.

Belongs to the thymidine kinase family. In terms of assembly, homotetramer.

It is found in the cytoplasm. The catalysed reaction is thymidine + ATP = dTMP + ADP + H(+). The protein is Thymidine kinase of Lactobacillus acidophilus (strain ATCC 700396 / NCK56 / N2 / NCFM).